The chain runs to 357 residues: Vomeronasal type-1 receptor 5 (357 aa).

Topologically, residues 1–3 are extracellular; sequence MLK. A helical membrane pass occupies residues 4–24; that stretch reads LVIIENMAEIMLFSLDLLLFS. At 25–52 the chain is on the cytoplasmic side; it reads TDILCFNFPSKMIKLPGFITIQIFFYPQ. A helical membrane pass occupies residues 53–73; sequence ASFGISANTILFLFHIFTFVF. At 74–81 the chain is on the extracellular side; it reads SHRSKSID. A helical membrane pass occupies residues 82-102; the sequence is MIISHLSLIHILLLFTQAILV. Residues 103–130 lie on the Cytoplasmic side of the membrane; the sequence is SLDFFGSQNTQDDLRCKVIVFLNKVMRG. A helical membrane pass occupies residues 131–151; it reads LSICTPCLLNVLQAIISPSIF. At 152–163 the chain is on the extracellular side; the sequence is SLAKLKHPSASH. The helical transmembrane segment at 164–184 threads the bilayer; it reads ILGFFLFSWVLNMFIGVIFCC. The Cytoplasmic segment spans residues 185–269; it reads TLWLPPVKWG…PVSPVKRASQ (85 aa). A helical membrane pass occupies residues 270-290; that stretch reads TILLLVSFVFIYWVDFMFSFS. At 291-300 the chain is on the extracellular side; it reads RGVTWINDSL. N-linked (GlcNAc...) asparagine glycosylation is present at asparagine 297. A helical transmembrane segment spans residues 301 to 321; it reads LVWFQVIVANSYATISPLMLI. Residues 322–357 are Cytoplasmic-facing; it reads YADNQIFKTLQMLWFKYLSPPKLMLKFNRQCGSTKK.

Belongs to the G-protein coupled receptor 1 family.

The protein resides in the cell membrane. Putative pheromone receptor. The polypeptide is Vomeronasal type-1 receptor 5 (VN1R5) (Gorilla gorilla gorilla (Western lowland gorilla)).